Here is a 307-residue protein sequence, read N- to C-terminus: Ornithine carbamoyltransferase (307 aa).

Carbamoyl phosphate contacts are provided by residues 51–54 (STRT), Gln-78, Arg-102, and 129–132 (HPCQ). L-ornithine is bound by residues Asn-160, Asp-220, and 224–225 (SM). Carbamoyl phosphate-binding positions include 260–261 (CL) and Arg-288.

This sequence belongs to the aspartate/ornithine carbamoyltransferase superfamily. OTCase family.

The protein localises to the cytoplasm. The catalysed reaction is carbamoyl phosphate + L-ornithine = L-citrulline + phosphate + H(+). Its pathway is amino-acid biosynthesis; L-arginine biosynthesis; L-arginine from L-ornithine and carbamoyl phosphate: step 1/3. In terms of biological role, reversibly catalyzes the transfer of the carbamoyl group from carbamoyl phosphate (CP) to the N(epsilon) atom of ornithine (ORN) to produce L-citrulline. The polypeptide is Ornithine carbamoyltransferase (argF) (Archaeoglobus fulgidus (strain ATCC 49558 / DSM 4304 / JCM 9628 / NBRC 100126 / VC-16)).